Consider the following 145-residue polypeptide: Small ribosomal subunit protein eS19 (145 aa).

The protein belongs to the eukaryotic ribosomal protein eS19 family. In terms of assembly, component of the small ribosomal subunit.

Its subcellular location is the cytoplasm. The protein localises to the nucleus. In terms of biological role, component of the small ribosomal subunit. The ribosome is a large ribonucleoprotein complex responsible for the synthesis of proteins in the cell. Required for pre-rRNA processing and maturation of 40S ribosomal subunits. The chain is Small ribosomal subunit protein eS19 (rps19) from Myxine glutinosa (Atlantic hagfish).